The following is a 349-amino-acid chain: tRNA pseudouridine synthase D (349 aa).

A substrate-binding site is contributed by Phe-27. Asp-80 acts as the Nucleophile in catalysis. Asn-129 is a binding site for substrate. A TRUD domain is found at 155 to 303; it reads GVPNYFGAQR…VEAARRAMLL (149 aa). Phe-329 provides a ligand contact to substrate.

It belongs to the pseudouridine synthase TruD family.

It catalyses the reaction uridine(13) in tRNA = pseudouridine(13) in tRNA. In terms of biological role, responsible for synthesis of pseudouridine from uracil-13 in transfer RNAs. This chain is tRNA pseudouridine synthase D, found in Shigella boydii serotype 18 (strain CDC 3083-94 / BS512).